The primary structure comprises 186 residues: Potassium-transporting ATPase KdpC subunit (186 aa).

A helical transmembrane segment spans residues leucine 10 to glycine 30.

The protein belongs to the KdpC family. The system is composed of three essential subunits: KdpA, KdpB and KdpC.

It localises to the cell membrane. Part of the high-affinity ATP-driven potassium transport (or Kdp) system, which catalyzes the hydrolysis of ATP coupled with the electrogenic transport of potassium into the cytoplasm. This subunit acts as a catalytic chaperone that increases the ATP-binding affinity of the ATP-hydrolyzing subunit KdpB by the formation of a transient KdpB/KdpC/ATP ternary complex. In Staphylococcus aureus (strain COL), this protein is Potassium-transporting ATPase KdpC subunit.